Reading from the N-terminus, the 498-residue chain is Glycerol kinase (498 aa).

Thr12 lines the ADP pocket. Residues Thr12, Thr13, and Ser14 each coordinate ATP. Thr12 lines the sn-glycerol 3-phosphate pocket. An ADP-binding site is contributed by Arg16. Arg82, Glu83, Tyr134, and Asp244 together coordinate sn-glycerol 3-phosphate. 5 residues coordinate glycerol: Arg82, Glu83, Tyr134, Asp244, and Gln245. ADP-binding residues include Thr266 and Gly310. ATP is bound by residues Thr266, Gly310, Gln314, and Gly411. Residues Gly411 and Asn415 each coordinate ADP.

This sequence belongs to the FGGY kinase family.

It carries out the reaction glycerol + ATP = sn-glycerol 3-phosphate + ADP + H(+). Its pathway is polyol metabolism; glycerol degradation via glycerol kinase pathway; sn-glycerol 3-phosphate from glycerol: step 1/1. Inhibited by fructose 1,6-bisphosphate (FBP). In terms of biological role, key enzyme in the regulation of glycerol uptake and metabolism. Catalyzes the phosphorylation of glycerol to yield sn-glycerol 3-phosphate. In Azorhizobium caulinodans (strain ATCC 43989 / DSM 5975 / JCM 20966 / LMG 6465 / NBRC 14845 / NCIMB 13405 / ORS 571), this protein is Glycerol kinase.